We begin with the raw amino-acid sequence, 153 residues long: MAVESRVTQEEIKKEPEKPIDREKTCPLLLRVFTTNNGRHHRMDEFSRGNVPSSELQIYTWMDATLKELTSLVKEVYPEARKKGTHFNFAIVFTDVKRPGYRVKEIGSTMSGRKGTDDSMTLQSQKFQIGDYLDIAITPPNRAPPPSGRMRPY.

Residues 1–20 (MAVESRVTQEEIKKEPEKPI) form a disordered region. Position 2 is an N-acetylalanine (alanine 2). Residues 7 to 20 (VTQEEIKKEPEKPI) are compositionally biased toward basic and acidic residues. Lysine 13 participates in a covalent cross-link: Glycyl lysine isopeptide (Lys-Gly) (interchain with G-Cter in SUMO2). The tract at residues 93–153 (FTDVKRPGYR…PPPSGRMRPY (61 aa)) is involved in splicing regulation activity.

It belongs to the SAP18 family. Found in a mRNA splicing-dependent exon junction complex (EJC). Component of the heterotrimeric ASAP (apoptosis- and splicing-associated protein) and PSAP complexes consisting of RNPS1, SAP18 and either ACIN1 or PNN, respectively; the ASAP and PSAP complexes probably are formed mutually exclusive. For the ASAP complex, the association of SAP18 seems to require a preformed RNPS1:ACIN1 complex. Forms a complex with SIN3A and HDAC1. Interacts with SUFU. As to expression, ubiquitous.

The protein resides in the nucleus. It is found in the cytoplasm. Its subcellular location is the nucleus speckle. Component of the SIN3-repressing complex. Enhances the ability of SIN3-HDAC1-mediated transcriptional repression. When tethered to the promoter, it can direct the formation of a repressive complex to core histone proteins. Auxiliary component of the splicing-dependent multiprotein exon junction complex (EJC) deposited at splice junction on mRNAs. The EJC is a dynamic structure consisting of core proteins and several peripheral nuclear and cytoplasmic associated factors that join the complex only transiently either during EJC assembly or during subsequent mRNA metabolism. Component of the ASAP and PSAP complexes which bind RNA in a sequence-independent manner and are proposed to be recruited to the EJC prior to or during the splicing process and to regulate specific excision of introns in specific transcription subsets. The ASAP complex can inhibit mRNA processing during in vitro splicing reactions. The ASAP complex promotes apoptosis and is disassembled after induction of apoptosis. Involved in the splicing modulation of BCL2L1/Bcl-X (and probably other apoptotic genes); specifically inhibits the formation of proapoptotic isoforms such as Bcl-X(S); the activity is different from the established EJC assembly and function. This Homo sapiens (Human) protein is Histone deacetylase complex subunit SAP18 (SAP18).